An 801-amino-acid chain; its full sequence is Protein ACCUMULATION AND REPLICATION OF CHLOROPLASTS 6, chloroplastic (801 aa).

Residues 1–67 (MEALSHVGIG…SSSFATATTT (67 aa)) constitute a chloroplast transit peptide. At 68–618 (ATLVSPPPSI…ADMLKEASVK (551 aa)) the chain is on the stromal side. One can recognise a J domain in the interval 89–153 (DFYQVLGAQT…RSRREYNEGL (65 aa)). The helical transmembrane segment at 619 to 638 (ILAAGVAIGLISLFSQKYFL) threads the bilayer. Over 639 to 801 (KSSSSFQRKD…KITEGSVLAS (163 aa)) the chain is Chloroplast intermembrane. An interaction with PDV2 region spans residues 639–801 (KSSSSFQRKD…KITEGSVLAS (163 aa)).

Self-interacts. Part of a complex made of ARC3, ARC6, FTSZ1 and FTSZ2. Interacts with FTSZ2-1 and FTSZ2-2 (via C-terminus), but not with FTSZ1; this interaction enables ARC3 binding to FTSZ2. Binds to CDT1A. Interacts (via C-terminus) with PDV2 (via C-terminus) in the chloroplast intermembrane space; this interaction induces homodimerization and leads to the formation of a heterotetramer containing two ARC6 and two PDV2 subunits. Interacts with MCD1 in the chloroplast stroma and facilitates its subsequent binding to FtsZ2-1. Interacts (via J domain) with CJD1 (via J-like domain). Mostly expressed in young leaves.

It is found in the plastid. The protein localises to the chloroplast inner membrane. Functionally, component of the plastid division machinery consisting in a binary fission accomplished by the simultaneous constriction of the FtsZ ring on the stromal side of the inner envelope membrane, and the ARC5 ring on the cytosolic side of the outer envelope membrane. Involved in the initiation of proplastid and plastid division (including chloroplasts, statoliths and leukoplasts). Promotes the assembly and/or stabilization of the plastid-dividing FtsZ ring, functioning as an antagonistic regulator of FtsZ dynamics against CDP1 and facilitating MCD1 positioning to membrane tethered FtsZ filaments to form the chloroplast Z-Ring; inhibits GDP-induced disassembly of FTSZ2 but enables ARC3 binding to FTSZ2-1. Relays plastid division site position between stroma and outer surface via interactions with the stromal FtsZ ring and the outer membrane PDV2 that recruits cytoplasmic ARC5 ring. Required for plastid equatorial positioning of PDV2 and ARC5. May contribute to gravitropism in stems and hypocotyls. Seems to influence stromule (stroma-filled tubular extensions of the plastid envelope membrane) length and frequency. This chain is Protein ACCUMULATION AND REPLICATION OF CHLOROPLASTS 6, chloroplastic, found in Arabidopsis thaliana (Mouse-ear cress).